The sequence spans 1108 residues: Eukaryotic translation initiation factor 2-alpha kinase 3 (1108 aa).

A signal peptide spans 1–27 (MERATQPRPRALLLLFLLLGCAAGISA). The Lumenal portion of the chain corresponds to 28 to 506 (VARARSLLAP…HYSKNIRKKD (479 aa)). The segment at 71–92 (EALPAASGEQESRATESDDDVE) is disordered. N-linked (GlcNAc...) asparagine glycosylation occurs at asparagine 253. A helical transmembrane segment spans residues 507 to 527 (PILLLHWWKEIFGTILLCIVA). Residues 528-1108 (TTFIVRRLFH…SSTFSPLPGN (581 aa)) lie on the Cytoplasmic side of the membrane. The tract at residues 542 to 563 (RQRKESETQCQTESKYDSVSAD) is disordered. One can recognise a Protein kinase domain in the interval 585–1069 (FEPIQCMGRG…ATDIIENAVF (485 aa)). 591-599 (MGRGGFGVV) is an ATP binding site. Tyrosine 611 carries the post-translational modification Phosphotyrosine; by autocatalysis. Residue lysine 614 coordinates ATP. The insert loop stretch occupies residues 639–880 (EHPGIVRYFN…SPKVYLYIQM (242 aa)). The residue at position 707 (serine 707) is a Phosphoserine. Disordered regions lie at residues 772-818 (DEGH…RMNR) and 832-856 (FKHS…TTLS). Residues 785–798 (SPYTRSREGTSSSI) are compositionally biased toward polar residues. A Phosphothreonine modification is found at threonine 794. Over residues 837–856 (SRSSSEATLSTSPTRPTTLS) the composition is skewed to low complexity. The active-site Proton acceptor is aspartate 929. Threonine 974 bears the Phosphothreonine mark. Positions 1080-1108 (LRQRSRSLSSSGTKHSRQPSSTFSPLPGN) are disordered. At serine 1086 the chain carries Phosphoserine. The segment covering 1097-1108 (QPSSTFSPLPGN) has biased composition (polar residues).

This sequence belongs to the protein kinase superfamily. Ser/Thr protein kinase family. GCN2 subfamily. In terms of assembly, forms dimers with HSPA5/BIP in resting cells. Homotetramerizes in response to endoplasmic reticulum (ER) stress, leading to its activation. Interacts with HSP90B1/GRP94. Interacts with DNAJC3; inhibiting EIF2AK3/PERK activity. Interacts with ATAD3A; ATAD3A and EIF2S1/eIF-2-alpha occupy a common binding site within the cytoplasmic loop of EIF2AK3/PERK, leading to prevent EIF2AK3/PERK association with its substrate EIF2S1/eIF-2-alpha. Interacts with MFN2. Interacts with TMEM33. Interacts with PDIA6. Interacts with LACC1. In terms of processing, oligomerization of the N-terminal ER luminal domain by ER stress promotes EIF2AK3/PERK trans-autophosphorylation of the C-terminal cytoplasmic kinase domain at multiple residues including Thr-974 on the kinase activation loop. Autophosphorylated at Tyr-611 following endoplasmic reticulum stress, leading to activate its activity. Dephosphorylated at Tyr-611 by PTPN1/PTP1B, leading to inactivate its enzyme activity. Phosphorylation at Thr-794 by AKT (AKT1, AKT2 and/or AKT3) inactivates EIF2AK3/PERK. Post-translationally, ADP-ribosylated by PARP16 upon ER stress, which increases kinase activity. In terms of tissue distribution, ubiquitous.

It localises to the endoplasmic reticulum membrane. The enzyme catalyses L-seryl-[protein] + ATP = O-phospho-L-seryl-[protein] + ADP + H(+). It carries out the reaction L-threonyl-[protein] + ATP = O-phospho-L-threonyl-[protein] + ADP + H(+). It catalyses the reaction L-tyrosyl-[protein] + ATP = O-phospho-L-tyrosyl-[protein] + ADP + H(+). With respect to regulation, inhibited by HSPA5/BIP in absence of stress. Perturbation in protein folding in the endoplasmic reticulum (ER) promotes reversible dissociation from HSPA5/BIP and oligomerization, resulting in trans-autophosphorylation and kinase activity induction. Inactivated following phosphorylation at Thr-794 by AKT (AKT1, AKT2 and/or AKT3). Inhibited by ATAD3A at mitochondria-endoplasmic reticulum contact sites, providing a safe haven for mitochondrial protein translation during ER stress. Functionally, metabolic-stress sensing protein kinase that phosphorylates the alpha subunit of eukaryotic translation initiation factor 2 (EIF2S1/eIF-2-alpha) in response to various stress, such as unfolded protein response (UPR). Key effector of the integrated stress response (ISR) to unfolded proteins: EIF2AK3/PERK specifically recognizes and binds misfolded proteins, leading to its activation and EIF2S1/eIF-2-alpha phosphorylation. EIF2S1/eIF-2-alpha phosphorylation in response to stress converts EIF2S1/eIF-2-alpha in a global protein synthesis inhibitor, leading to a global attenuation of cap-dependent translation, while concomitantly initiating the preferential translation of ISR-specific mRNAs, such as the transcriptional activators ATF4 and QRICH1, and hence allowing ATF4- and QRICH1-mediated reprogramming. The EIF2AK3/PERK-mediated unfolded protein response increases mitochondrial oxidative phosphorylation by promoting ATF4-mediated expression of COX7A2L/SCAF1, thereby increasing formation of respiratory chain supercomplexes. In contrast to most subcellular compartments, mitochondria are protected from the EIF2AK3/PERK-mediated unfolded protein response due to EIF2AK3/PERK inhibition by ATAD3A at mitochondria-endoplasmic reticulum contact sites. In addition to EIF2S1/eIF-2-alpha, also phosphorylates NFE2L2/NRF2 in response to stress, promoting release of NFE2L2/NRF2 from the BCR(KEAP1) complex, leading to nuclear accumulation and activation of NFE2L2/NRF2. Serves as a critical effector of unfolded protein response (UPR)-induced G1 growth arrest due to the loss of cyclin-D1 (CCND1). Involved in control of mitochondrial morphology and function. The sequence is that of Eukaryotic translation initiation factor 2-alpha kinase 3 (Eif2ak3) from Rattus norvegicus (Rat).